The following is a 314-amino-acid chain: Thymidylate synthase (314 aa).

DUMP-binding positions include Arg-21 and 176–177 (RR). Cys-196 (nucleophile) is an active-site residue. DUMP-binding positions include 216–219 (RSAD), Asn-227, and 257–259 (HLY). Asp-219 contributes to the (6R)-5,10-methylene-5,6,7,8-tetrahydrofolate binding site. Ser-313 is a binding site for (6R)-5,10-methylene-5,6,7,8-tetrahydrofolate.

It belongs to the thymidylate synthase family. Bacterial-type ThyA subfamily. As to quaternary structure, homodimer.

It localises to the cytoplasm. The catalysed reaction is dUMP + (6R)-5,10-methylene-5,6,7,8-tetrahydrofolate = 7,8-dihydrofolate + dTMP. It participates in pyrimidine metabolism; dTTP biosynthesis. Functionally, catalyzes the reductive methylation of 2'-deoxyuridine-5'-monophosphate (dUMP) to 2'-deoxythymidine-5'-monophosphate (dTMP) while utilizing 5,10-methylenetetrahydrofolate (mTHF) as the methyl donor and reductant in the reaction, yielding dihydrofolate (DHF) as a by-product. This enzymatic reaction provides an intracellular de novo source of dTMP, an essential precursor for DNA biosynthesis. The chain is Thymidylate synthase from Listeria monocytogenes serotype 4b (strain CLIP80459).